The sequence spans 262 residues: Phosphate import ATP-binding protein PstB (262 aa).

The 243-residue stretch at 15–257 (AKASNLNLWY…PQKSKTEQYI (243 aa)) folds into the ABC transporter domain. 47 to 54 (GPSGCGKS) contributes to the ATP binding site.

The protein belongs to the ABC transporter superfamily. Phosphate importer (TC 3.A.1.7) family. As to quaternary structure, the complex is composed of two ATP-binding proteins (PstB), two transmembrane proteins (PstC and PstA) and a solute-binding protein (PstS).

It is found in the cell inner membrane. It carries out the reaction phosphate(out) + ATP + H2O = ADP + 2 phosphate(in) + H(+). Part of the ABC transporter complex PstSACB involved in phosphate import. Responsible for energy coupling to the transport system. The polypeptide is Phosphate import ATP-binding protein PstB (Wolinella succinogenes (strain ATCC 29543 / DSM 1740 / CCUG 13145 / JCM 31913 / LMG 7466 / NCTC 11488 / FDC 602W) (Vibrio succinogenes)).